Here is a 675-residue protein sequence, read N- to C-terminus: DNA ligase (675 aa).

NAD(+) contacts are provided by residues 34–38, 83–84, and E117; these read DYAFD and SL. K119 (N6-AMP-lysine intermediate) is an active-site residue. 4 residues coordinate NAD(+): R140, E184, K297, and K321. Zn(2+) contacts are provided by C415, C418, C433, and C439. Residues 598–675 form the BRCT domain; that stretch reads LVNRNFEGMK…GEEEFEAMLF (78 aa).

Belongs to the NAD-dependent DNA ligase family. LigA subfamily. Mg(2+) is required as a cofactor. It depends on Mn(2+) as a cofactor.

The enzyme catalyses NAD(+) + (deoxyribonucleotide)n-3'-hydroxyl + 5'-phospho-(deoxyribonucleotide)m = (deoxyribonucleotide)n+m + AMP + beta-nicotinamide D-nucleotide.. In terms of biological role, DNA ligase that catalyzes the formation of phosphodiester linkages between 5'-phosphoryl and 3'-hydroxyl groups in double-stranded DNA using NAD as a coenzyme and as the energy source for the reaction. It is essential for DNA replication and repair of damaged DNA. The chain is DNA ligase from Prosthecochloris aestuarii (strain DSM 271 / SK 413).